The chain runs to 1196 residues: Homeodomain-interacting protein kinase 2 (1196 aa).

Residue serine 16 is modified to Phosphoserine. Lysine 32 participates in a covalent cross-link: Glycyl lysine isopeptide (Lys-Gly) (interchain with G-Cter in SUMO); alternate. A Glycyl lysine isopeptide (Lys-Gly) (interchain with G-Cter in SUMO2); alternate cross-link involves residue lysine 32. The interval 50–69 is disordered; the sequence is VYSQSKNIPPSQPASTTVST. Positions 97 to 230 are transcriptional corepression; that stretch reads SASSTSVTGQ…TNEIVAIKIL (134 aa). A phosphoserine mark is found at serine 118 and serine 135. Threonine 141 is subject to Phosphothreonine. Positions 189 to 520 are interaction with DAXX; it reads HEVLCSMTNT…DADKRVTPIE (332 aa). A Protein kinase domain is found at 199-527; sequence YEVLEFLGRG…PIETLNHPFV (329 aa). ATP contacts are provided by residues 205 to 213 and lysine 228; that span reads LGRGTFGQV. Residues threonine 252 and threonine 273 each carry the phosphothreonine modification. Catalysis depends on aspartate 324, which acts as the Proton acceptor. Tyrosine 361 is subject to Phosphotyrosine; by autocatalysis. Serine 441 is modified (phosphoserine). Threonine 482, threonine 517, and threonine 566 each carry phosphothreonine. The interaction with SKI and SMAD1 stretch occupies residues 539 to 844; it reads AHVKSCFQNM…KENTPPRCAM (306 aa). The segment at 600–800 is interaction with DAZAP2; sequence SATLSLANPE…MRQQPTSTTS (201 aa). Phosphoserine is present on residues serine 634 and serine 668. At threonine 687 the chain carries Phosphothreonine. Residues 752–897 form an interaction with POU4F1 region; sequence RNTHAHGSHY…ITISSDTDEE (146 aa). Residues 774 to 876 are interaction with CTBP1; it reads HVTLPAAQPL…TRERQRQTIV (103 aa). Positions 787–897 are interaction with HMGA1; that stretch reads VAHVMRQQPT…ITISSDTDEE (111 aa). Disordered regions lie at residues 792–847 and 891–963; these read RQQP…MVHS and SSDT…CTGN. The segment covering 793–829 has biased composition (polar residues); that stretch reads QQPTSTTSSRKSKQHQSSVRNVSTCEVTSSQAISSPQ. A Nuclear localization signal 1 (NLS1) motif is present at residues 802–805; that stretch reads RKSK. Phosphoserine occurs at positions 815 and 827. Positions 832–835 match the Nuclear localization signal 2 (NLS2) motif; that stretch reads KRVK. The segment at 839-934 is interaction with TP53 and TP73; the sequence is PPRCAMVHSS…PYSDSSSNTS (96 aa). The tract at residues 873–907 is interaction with UBE2I; it reads QTIVIPDTPSPTVSVITISSDTDEEEEQKHAPTST. Residues 873–980 form a localization to nuclear speckles region; that stretch reads QTIVIPDTPS…PLKTQASEVL (108 aa). The interval 873–980 is required for localization to nuclear speckles; that stretch reads QTIVIPDTPS…PLKTQASEVL (108 aa). An SUMO interaction motifs (SIM); required for nuclear localization and kinase activity region spans residues 884 to 908; sequence TVSVITISSDTDEEEEQKHAPTSTV. Residues 923 to 937 show a composition bias toward low complexity; that stretch reads DSPYSDSSSNTSPYS. Serine 934 is modified (phosphoserine). Residues 935–1050 form an interaction with AXIN1 region; it reads PYSVQQRTGH…LSQAQQHMAA (116 aa). The span at 938-951 shows a compositional bias: polar residues; sequence VQQRTGHNGTNTLD. Residues lysine 953 and lysine 973 each participate in a glycyl lysine isopeptide (Lys-Gly) (interchain with G-Cter in SUMO2) cross-link. The interval 984–1196 is autoinhibitory domain (AID); sequence DSLGPAISAS…PAKVNQYPYI (213 aa). Phosphoserine occurs at positions 991, 993, 1042, 1153, and 1186. The span at 991–1046 shows a compositional bias: low complexity; the sequence is SASHHSSSFKSKSSSTVTSTSGHSSGSSSGAIAYRQQRPGPHFQQQQPLNLSQAQQ. A disordered region spans residues 991-1058; the sequence is SASHHSSSFK…AADRTGSHRR (68 aa). A Glycyl lysine isopeptide (Lys-Gly) (interchain with G-Cter in SUMO) cross-link involves residue lysine 1189.

This sequence belongs to the protein kinase superfamily. CMGC Ser/Thr protein kinase family. HIPK subfamily. Interacts with CREB1, SIAH1, WSB1, CBX4, TRADD, p53/TP53, TP73, TP63, CREBBP, DAXX, P53DINP1, SKI, SMAD1, SMAD2 and SMAD3, but not SMAD4. Interacts with SP100; positively regulates TP53-dependent transcription. Interacts with ATF1, PML, RUNX1, EP300, NKX1-2, NKX2-5, UBE2I, HMGA1, CTBP1, AXIN1, NLK, MYB, POU4F1, POU4F2, POU4F3, UBE2I, UBL1 and ZBTB4. Probably part of a complex consisting of p53/TP53, HIPK2 and AXIN1. Interacts with DAZAP2; the interaction results in phosphorylation of DAZAP2 which causes localization of DAZAP2 to the nucleus, reduces interaction of DAZAP2 with HIPK2 and prevents DAZAP2-dependent degradation of HIPK2. Interacts with SIAH1; the interaction is promoted by DAZAP2 and results in SIAH1-mediated ubiquitination and subsequent proteasomal degradation of HIPK2. In terms of assembly, interacts with SPN/CD43 cytoplasmic tail. Sumoylated. When conjugated it is directed to nuclear speckles. Desumoylated by SENP1. Sumoylation on Lys-32 is promoted by the E3 SUMO-protein ligase CBX4. Post-translationally, autophosphorylation at Tyr-361 in the activation loop activates the kinase and promotes nuclear localization. In terms of processing, ubiquitinated by FBXO3, WSB1 and SIAH1, leading to rapid proteasome-dependent degradation. The degradation mediated by FBXO3, but not ubiquitination, is prevented in the presence of PML. The degradation mediated by WSB1 and SIAH1 is reversibly reduced upon DNA damage. Cleaved at Asp-923 and Asp-984 by CASP6 in a p53/TP53-dependent manner. The cleaved form lacks the autoinhibitory C-terminal domain (AID), resulting in a hyperactive kinase, which potentiates p53/TP53 Ser-46 phosphorylation and subsequent activation of the cell death machinery. As to expression, ubiquitous. Abundant in muscle, heart, small intestine, stomach, kidney and brain; and low in testis, skin and lung.

It localises to the nucleus. The protein localises to the PML body. It is found in the cytoplasm. The enzyme catalyses L-seryl-[protein] + ATP = O-phospho-L-seryl-[protein] + ADP + H(+). The catalysed reaction is L-threonyl-[protein] + ATP = O-phospho-L-threonyl-[protein] + ADP + H(+). Functionally, serine/threonine-protein kinase involved in transcription regulation, p53/TP53-mediated cellular apoptosis and regulation of the cell cycle. Acts as a corepressor of several transcription factors, including SMAD1 and POU4F1/Brn3a and probably NK homeodomain transcription factors. Phosphorylates PDX1, ATF1, PML, p53/TP53, CREB1, CTBP1, CBX4, RUNX1, EP300, CTNNB1, HMGA1, ZBTB4 and DAZAP2. Inhibits cell growth and promotes apoptosis through the activation of p53/TP53 both at the transcription level and at the protein level (by phosphorylation and indirect acetylation). The phosphorylation of p53/TP53 may be mediated by a p53/TP53-HIPK2-AXIN1 complex. Involved in the response to hypoxia by acting as a transcriptional co-suppressor of HIF1A. Mediates transcriptional activation of TP73. In response to TGFB, cooperates with DAXX to activate JNK. Negative regulator through phosphorylation and subsequent proteasomal degradation of CTNNB1 and the antiapoptotic factor CTBP1. In the Wnt/beta-catenin signaling pathway acts as an intermediate kinase between MAP3K7/TAK1 and NLK to promote the proteasomal degradation of MYB. Phosphorylates CBX4 upon DNA damage and promotes its E3 SUMO-protein ligase activity. Activates CREB1 and ATF1 transcription factors by phosphorylation in response to genotoxic stress. In response to DNA damage, stabilizes PML by phosphorylation. PML, HIPK2 and FBXO3 may act synergically to activate p53/TP53-dependent transactivation. Promotes angiogenesis, and is involved in erythroid differentiation, especially during fetal liver erythropoiesis. Phosphorylation of RUNX1 and EP300 stimulates EP300 transcription regulation activity. Triggers ZBTB4 protein degradation in response to DNA damage. In response to DNA damage, phosphorylates DAZAP2 which localizes DAZAP2 to the nucleus, reduces interaction of DAZAP2 with HIPK2 and prevents DAZAP2-dependent ubiquitination of HIPK2 by E3 ubiquitin-protein ligase SIAH1 and subsequent proteasomal degradation. Modulates HMGA1 DNA-binding affinity. In response to high glucose, triggers phosphorylation-mediated subnuclear localization shifting of PDX1. Involved in the regulation of eye size, lens formation and retinal lamination during late embryogenesis. In Mus musculus (Mouse), this protein is Homeodomain-interacting protein kinase 2 (Hipk2).